The chain runs to 462 residues: Cysteine--tRNA ligase (462 aa).

Residue Cys-24 participates in Zn(2+) binding. The short motif at 26–36 (PTVYDDAHLGH) is the 'HIGH' region element. Zn(2+) is bound by residues Cys-199, His-224, and Glu-228. The 'KMSKS' region signature appears at 256–260 (KMSKS). Lys-259 is an ATP binding site.

It belongs to the class-I aminoacyl-tRNA synthetase family. In terms of assembly, monomer. Zn(2+) serves as cofactor.

The protein resides in the cytoplasm. It catalyses the reaction tRNA(Cys) + L-cysteine + ATP = L-cysteinyl-tRNA(Cys) + AMP + diphosphate. The protein is Cysteine--tRNA ligase of Campylobacter jejuni subsp. doylei (strain ATCC BAA-1458 / RM4099 / 269.97).